The primary structure comprises 978 residues: MTPAPAAASYRALVALLLVAVAVADDGSTLLEIKKSFRNVDNVLYDWAGGDYCSWRGVLCDNVTFAVAALNLSGLNLGGEISPAVGRLKGIVSIDLKSNGLSGQIPDEIGDCSSLKTLDLSFNSLDGDIPFSVSKLKHIESLILKNNQLIGVIPSTLSQLPNLKILDLAQNKLSGEIPRLIYWNEVLQYLGLRGNNLEGSISPDICQLTGLWYFDVKNNSLTGPIPETIGNCTSFQVLDLSYNKLSGSIPFNIGFLQVATLSLQGNMFTGPIPSVIGLMQALAVLDLSYNQLSGPIPSILGNLTYTEKLYMQGNKLTGPIPPELGNMSTLHYLELNDNQLSGFIPPEFGKLTGLFDLNLANNNFEGPIPDNISSCVNLNSFNAYGNRLNGTIPPSLHKLESMTYLNLSSNFLSGSIPIELSRINNLDTLDLSCNMITGPIPSTIGSLEHLLRLNLSNNGLVGFIPAEIGNLRSIMEIDMSNNHLGGLIPQELGMLQNLMLLNLKNNNITGDVSSLMNCFSLNILNVSYNNLAGVVPTDNNFSRFSPDSFLGNPGLCGYWLGSSCRSSGHQQKPLISKAAILGIAVGGLVILLMILVAVCRPHSPPVFKDVSVSKPVSNVPPKLVILHMNLSLLVYEDIMTMTENLSEKYIIGYGASSTVYKCVSKNRKPVAVKKLYAHYPQSFKEFETELETVGSIKHRNLVSLQGYSLSPVGNLLFYDYMENGSLWDVLHEGPTKKKKLDWETRLRIALGAAQGLAYLHHDCSPRIIHRDVKSKNILLDKDYEAHLTDFGIAKSLCVSKTHTSTYVMGTIGYIDPEYARTSRLNEKSDVYSYGIVLLELLTGKKPVDNECNLHHLILSKTANNAVMETVDPDIADTCKDLGEVKKVFQLALLCTKRQPSDRPTMHEVVRVLDCLVRPDPPPKSAQQLAMPQRPAVPSYINEYVSLRGTSVLSCANSSCTSDAELFLKFGEVISQNTE.

An N-terminal signal peptide occupies residues 1–24 (MTPAPAAASYRALVALLLVAVAVA). Over 25-577 (DDGSTLLEIK…GHQQKPLISK (553 aa)) the chain is Extracellular. 2 N-linked (GlcNAc...) asparagine glycosylation sites follow: N62 and N71. LRR repeat units follow at residues 66-87 (AVAA…AVGR), 88-112 (LKGI…IGDC), 114-136 (SLKT…VSKL), 137-159 (KHIE…TLSQ), 160-184 (LPNL…IYWN), 186-208 (VLQY…ICQL), 209-232 (TGLW…IGNC), 233-257 (TSFQ…GFLQ), 259-278 (ATLS…VIGL), 279-302 (MQAL…ILGN), 304-327 (TYTE…LGNM), 328-350 (STLH…EFGK), 352-375 (TGLF…ISSC), 377-399 (NLNS…LHKL), 400-423 (ESMT…LSRI), 424-447 (NNLD…IGSL), 449-470 (HLLR…EIGN), 471-494 (LRSI…ELGM), 496-518 (QNLM…LMNC), and 519-543 (FSLN…NFSR). 2 N-linked (GlcNAc...) asparagine glycosylation sites follow: N218 and N231. N-linked (GlcNAc...) asparagine glycosylation is found at N302 and N326. Residues N371, N389, and N406 are each glycosylated (N-linked (GlcNAc...) asparagine). N454 carries N-linked (GlcNAc...) asparagine glycosylation. Residues N507, N525, and N540 are each glycosylated (N-linked (GlcNAc...) asparagine). The chain crosses the membrane as a helical span at residues 578 to 598 (AAILGIAVGGLVILLMILVAV). Over 599 to 978 (CRPHSPPVFK…FGEVISQNTE (380 aa)) the chain is Cytoplasmic. The region spanning 645 to 916 (LSEKYIIGYG…EVVRVLDCLV (272 aa)) is the Protein kinase domain. ATP-binding positions include 651–659 (IGYGASSTV) and K673. D771 (proton acceptor) is an active-site residue.

It belongs to the protein kinase superfamily. Ser/Thr protein kinase family.

The protein localises to the cell membrane. It catalyses the reaction L-seryl-[protein] + ATP = O-phospho-L-seryl-[protein] + ADP + H(+). The catalysed reaction is L-threonyl-[protein] + ATP = O-phospho-L-threonyl-[protein] + ADP + H(+). In terms of biological role, receptor kinase involved in the regulation of thermotolerance. Functions as a positive regulator of heat tolerance. May be involved in the regulation of cell proliferation and cell growth. The polypeptide is LRR receptor-like serine/threonine-protein kinase ER1 (Oryza sativa subsp. japonica (Rice)).